A 398-amino-acid polypeptide reads, in one-letter code: MGAPAASLLLLLLLFACCWAPGGANLSQDDSQPWTSDETVVAGGTVVLKCQVKDHEDSSLQWSNPAQQTLYFGEKRALRDNRIQLVTSTPHELSISISNVALADEGEYTCSIFTMPVRTAKSLVTVLGIPQKPIITGYKSSLREKDTATLNCQSSGSKPAARLTWRKGDQELHGEPTRIQEDPNGKTFTVSSSVTFQVTREDDGASIVCSVNHESLKGADRSTSQRIEVLYTPTAMIRPDPPHPREGQKLLLHCEGRGNPVPQQYLWEKEGSVPPLKMTQESALIFPFLNKSDSGTYGCTATSNMGSYKAYYTLNVNDPSPVPSSSSTYHAIIGGIVAFIVFLLLIMLIFLGHYLIRHKGTYLTHEAKGSDDAPDADTAIINAEGGQSGGDDKKEYFI.

A signal peptide spans 1–24 (MGAPAASLLLLLLLFACCWAPGGA). The Ig-like V-type domain maps to 25 to 126 (NLSQDDSQPW…VRTAKSLVTV (102 aa)). At 25-330 (NLSQDDSQPW…PVPSSSSTYH (306 aa)) the chain is on the extracellular side. Intrachain disulfides connect cysteine 50–cysteine 110, cysteine 152–cysteine 209, and cysteine 254–cysteine 299. Ig-like C2-type domains follow at residues 130–228 (PQKP…QRIE) and 233–315 (PTAM…YTLN). N-linked (GlcNAc...) asparagine glycosylation occurs at asparagine 290. The chain crosses the membrane as a helical span at residues 331–351 (AIIGGIVAFIVFLLLIMLIFL). Topologically, residues 352–398 (GHYLIRHKGTYLTHEAKGSDDAPDADTAIINAEGGQSGGDDKKEYFI) are cytoplasmic. Residues 367–398 (AKGSDDAPDADTAIINAEGGQSGGDDKKEYFI) are disordered. The residue at position 388 (serine 388) is a Phosphoserine.

It belongs to the nectin family. As to quaternary structure, homodimer. Can form trans-heterodimers with NECTIN3. Interacts with EPB41L1, DLG3, PALS2 and CASK. In terms of tissue distribution, isoform 1 is expressed mainly in adult and fetal brain. Isoform 2 is highly expressed in adult brain and weakly expressed in placenta. In brain, Isoform 2 is highly expressed in cerebellum.

It is found in the cell membrane. The protein localises to the cell junction. Functionally, involved in cell-cell adhesion. Has both calcium-independent homophilic cell-cell adhesion activity and calcium-independent heterophilic cell-cell adhesion activity with IGSF4, NECTIN1 and NECTIN3. Interaction with EPB41L1 may regulate structure or function of cell-cell junctions. The sequence is that of Cell adhesion molecule 3 (CADM3) from Homo sapiens (Human).